We begin with the raw amino-acid sequence, 184 residues long: NADH-quinone oxidoreductase subunit B (184 aa).

4 residues coordinate [4Fe-4S] cluster: Cys37, Cys38, Cys103, and Cys132.

This sequence belongs to the complex I 20 kDa subunit family. In terms of assembly, NDH-1 is composed of 14 different subunits. Subunits NuoB, C, D, E, F, and G constitute the peripheral sector of the complex. The cofactor is [4Fe-4S] cluster.

The protein resides in the cell membrane. It catalyses the reaction a quinone + NADH + 5 H(+)(in) = a quinol + NAD(+) + 4 H(+)(out). NDH-1 shuttles electrons from NADH, via FMN and iron-sulfur (Fe-S) centers, to quinones in the respiratory chain. The immediate electron acceptor for the enzyme in this species is believed to be a menaquinone. Couples the redox reaction to proton translocation (for every two electrons transferred, four hydrogen ions are translocated across the cytoplasmic membrane), and thus conserves the redox energy in a proton gradient. This Rhodococcus erythropolis (strain PR4 / NBRC 100887) protein is NADH-quinone oxidoreductase subunit B.